Here is a 240-residue protein sequence, read N- to C-terminus: Ribose-5-phosphate isomerase (240 aa).

Residues 34 to 37 (SGST), 88 to 91 (DGAD), and 101 to 104 (KGGG) contribute to the substrate site. Glu-110 functions as the Proton acceptor in the catalytic mechanism. A substrate-binding site is contributed by Lys-128.

The protein belongs to the ribose 5-phosphate isomerase family.

The protein resides in the cytoplasm. The enzyme catalyses aldehydo-D-ribose 5-phosphate = D-ribulose 5-phosphate. It functions in the pathway carbohydrate degradation; pentose phosphate pathway; D-ribose 5-phosphate from D-ribulose 5-phosphate (non-oxidative stage): step 1/1. Its function is as follows. Involved in the first step of the non-oxidative branch of the pentose phosphate pathway. It catalyzes the reversible conversion of ribose-5-phosphate to ribulose 5-phosphate. This Candida albicans (strain SC5314 / ATCC MYA-2876) (Yeast) protein is Ribose-5-phosphate isomerase (RKI1).